A 457-amino-acid chain; its full sequence is ATP synthase subunit beta (457 aa).

ATP is bound at residue 147-154 (GGAGVGKT).

It belongs to the ATPase alpha/beta chains family. In terms of assembly, F-type ATPases have 2 components, CF(1) - the catalytic core - and CF(0) - the membrane proton channel. CF(1) has five subunits: alpha(3), beta(3), gamma(1), delta(1), epsilon(1). CF(0) has three main subunits: a(1), b(2) and c(9-12). The alpha and beta chains form an alternating ring which encloses part of the gamma chain. CF(1) is attached to CF(0) by a central stalk formed by the gamma and epsilon chains, while a peripheral stalk is formed by the delta and b chains.

It is found in the cell inner membrane. The enzyme catalyses ATP + H2O + 4 H(+)(in) = ADP + phosphate + 5 H(+)(out). Produces ATP from ADP in the presence of a proton gradient across the membrane. The catalytic sites are hosted primarily by the beta subunits. This Haemophilus influenzae (strain 86-028NP) protein is ATP synthase subunit beta.